The primary structure comprises 26 residues: L-amino-acid oxidase (26 aa).

The protein belongs to the flavin monoamine oxidase family. As to quaternary structure, monomer. The cofactor is FAD. Not glycosylated. In terms of tissue distribution, expressed by the ink gland.

The protein localises to the secreted. It catalyses the reaction an L-alpha-amino acid + O2 + H2O = a 2-oxocarboxylate + H2O2 + NH4(+). Catalyzes the oxidative deamination of positively charged L-amino acids L-Lys and L-Arg but not of amino acids L-His, L-Asp or L-Glu. Has antibacterial activity against the Gram-positive bacterium S.aureus (MIC=15 ug/ml). This antibacterial activity is bacteriostatic in the absence of amino acids L-Lys or L-Arg but bactericidal in their presence. The antibacterial effect is largely dependent on H(2)O(2) produced in the oxidative deamination of substrates. Has hemagglutinating activity towards rabbit erythrocytes. Hemagglutinating activity is inhibited by the glycoprotein fetuin, but not by glucose, mannose, galactose, N-acetylglucosamine, N-acetylgalactosamine or sialic acid. The chain is L-amino-acid oxidase from Aplysia dactylomela (Spotted sea hare).